The sequence spans 917 residues: ABC transporter A family member 12 (917 aa).

6 consecutive transmembrane segments (helical) span residues 34-54, 323-343, 377-397, 409-429, 435-455, and 508-528; these read LILV…VLDA, IASL…FPVI, FLTI…AIGL, FVFY…VSSI, TVTV…SFLF, and GEVF…AYYI. One can recognise an ABC transporter domain in the interval 595-832; that stretch reads ILCDNLKKVY…YGGSYVFTMT (238 aa). 633–640 is a binding site for ATP; the sequence is GPNGAGKT.

It belongs to the ABC transporter superfamily. ABCA family. CPR flippase (TC 3.A.1.211) subfamily.

Its subcellular location is the membrane. This Arabidopsis thaliana (Mouse-ear cress) protein is ABC transporter A family member 12 (ABCA12).